The sequence spans 341 residues: Phenylalanine--tRNA ligase alpha subunit (341 aa).

Glu256 is a binding site for Mg(2+).

Belongs to the class-II aminoacyl-tRNA synthetase family. Phe-tRNA synthetase alpha subunit type 1 subfamily. As to quaternary structure, tetramer of two alpha and two beta subunits. Mg(2+) serves as cofactor.

It is found in the cytoplasm. The enzyme catalyses tRNA(Phe) + L-phenylalanine + ATP = L-phenylalanyl-tRNA(Phe) + AMP + diphosphate + H(+). The protein is Phenylalanine--tRNA ligase alpha subunit of Leptospira interrogans serogroup Icterohaemorrhagiae serovar Lai (strain 56601).